An 822-amino-acid polypeptide reads, in one-letter code: MVLVCASSSKCKRNTFLQLAMVLFAVVMARIALYFHNHLDEPLVDPYDANGNPQFSEANALKHVIHLSDDIGYRILGTIEQERAREYIMNEVLALQKQLQDGPNADIHQMEVSLESGDGAHRFDFMNKYVIKKYQNLKNIVVRLSNGTEACKEEAVLINAHVDSTLPSPGATDDALAVAILLEAIRIFISRPVPLTHSIVFLFNDAEESLQDASHMFITQSPLRDTIKCVVNLEACGTTGSEILFQATSNEMIKAYSHVPHPFGTVLADDVFRTGLILSDTDFRQFVQYGNLTGLDMAVVKNSYLYHTKKDLAPYISPGTPQNFGENILAILTYLVSPEADLNNMKSSGTVYFSVFNSLFFMYSKLTSKILNTLVGGLGILLTLRGSEGSFTVALIAQVISIAGIFVIPNIWAYILGNVLDCGMSWFRNEYWPLFIYLPAIFASLFFTESLFKRSEHLALRATIFIFSLLTFIPLPSAYLFTIIDFFMVFALFLNDKILAKPGTVHPLTYFIGSIGAMTVGFESAINLLEIFVPLTGRIGTDKVADNVVATVCVCGFNIYFPLMSPWIQRFRSRCCFRLGLLFSIFVVGFSSFILAKQDTYYDSLHPRRIFVQRMENITSNEVSLHIASADSAPGFDKLSSDLSSLLTDEPVVKTEMDDWNSDWDTVYPFSQFLGSYRIPLNDTVDVTTLPSIKFSNKVVKDNVVNVTVTVEHPGLIWTVVSFDADVLSWSLPEVPSTVRRHHVREVSAYGLDSYSFNMSYLEAPIYFDFVGVDGVGHYPSKASEGRDRASIQLCEKLTNDYLPDWTDTLCIGVVSGNFKLE.

The Cytoplasmic portion of the chain corresponds to 1-14 (MVLVCASSSKCKRN). Residues 15 to 35 (TFLQLAMVLFAVVMARIALYF) form a helical membrane-spanning segment. Topologically, residues 36–365 (HNHLDEPLVD…FNSLFFMYSK (330 aa)) are lumenal. A glycan (N-linked (GlcNAc...) asparagine) is linked at Asn146. His161 and Asp173 together coordinate Zn(2+). Glu207 (proton acceptor) is an active-site residue. Zn(2+) contacts are provided by Glu208 and Glu234. Residue Asn291 is glycosylated (N-linked (GlcNAc...) asparagine). His307 serves as a coordination point for Zn(2+). A helical membrane pass occupies residues 366–384 (LTSKILNTLVGGLGILLTL). The Cytoplasmic portion of the chain corresponds to 385–392 (RGSEGSFT). Residues 393–413 (VALIAQVISIAGIFVIPNIWA) form a helical membrane-spanning segment. Residues 414 to 431 (YILGNVLDCGMSWFRNEY) lie on the Lumenal side of the membrane. Residues 432–452 (WPLFIYLPAIFASLFFTESLF) form a helical membrane-spanning segment. Residues 453–463 (KRSEHLALRAT) lie on the Cytoplasmic side of the membrane. The helical transmembrane segment at 464-484 (IFIFSLLTFIPLPSAYLFTII) threads the bilayer. Asp485 is a topological domain (lumenal). Residues 486 to 506 (FFMVFALFLNDKILAKPGTVH) form a helical membrane-spanning segment. Over 507-514 (PLTYFIGS) the chain is Cytoplasmic. The chain crosses the membrane as a helical span at residues 515-535 (IGAMTVGFESAINLLEIFVPL). Residues 536-547 (TGRIGTDKVADN) are Lumenal-facing. A helical transmembrane segment spans residues 548-568 (VVATVCVCGFNIYFPLMSPWI). Residues 569–575 (QRFRSRC) lie on the Cytoplasmic side of the membrane. The helical transmembrane segment at 576–596 (CFRLGLLFSIFVVGFSSFILA) threads the bilayer. Residues 597 to 822 (KQDTYYDSLH…GVVSGNFKLE (226 aa)) are Lumenal-facing. Asn617, Asn682, Asn706, and Asn758 each carry an N-linked (GlcNAc...) asparagine glycan.

This sequence belongs to the peptidase M28 family. M28B subfamily. Zn(2+) serves as cofactor.

The protein resides in the endoplasmic reticulum membrane. This is Putative endoplasmic reticulum metallopeptidase 1 from Schizosaccharomyces pombe (strain 972 / ATCC 24843) (Fission yeast).